A 671-amino-acid polypeptide reads, in one-letter code: Receptor-interacting serine/threonine-protein kinase 1 (671 aa).

Residue S6 is modified to Phosphoserine; by IKKA and IKKB. Positions 17 to 289 constitute a Protein kinase domain; that stretch reads FLESAELDSG…GIEEKFRPFY (273 aa). S20 carries the post-translational modification Phosphoserine; by autocatalysis. Residues 23–31 and K45 each bind ATP; that span reads LDSGGFGKV. S25 bears the Phosphoserine; by IKKA and IKKB mark. The active-site Proton acceptor is D138. S161 is subject to Phosphoserine; by RIPK3 and autocatalysis. S166 is modified (phosphoserine; by autocatalysis). Residues 290–582 form an interaction with SQSTM1 region; sequence LSQLEESVEE…QAIFDNTTSL (293 aa). S303 carries the phosphoserine modification. 3 positions are modified to phosphoserine; by MAP3K7: S320, S331, and S333. Residues 331–348 are compositionally biased toward polar residues; that stretch reads SRSNSATEQPGSLHSSQG. The interval 331-354 is disordered; it reads SRSNSATEQPGSLHSSQGLGMGPV. A Glycyl lysine isopeptide (Lys-Gly) (interchain with G-Cter in ubiquitin) cross-link involves residue K377. At Y384 the chain carries Phosphotyrosine. The segment at 389 to 455 is disordered; it reads SRMDRQTKQQ…GNAVHQPSGL (67 aa). Polar residues predominate over residues 428-444; sequence NFQNTEGKGTAYSSAAS. The RIP homotypic interaction motif (RHIM) signature appears at 531–547; the sequence is YTIYNSTGIQIGAYNYM. Residues 583 to 669 form the Death domain; the sequence is TDKHLDPIRE…DLLSSLIYVS (87 aa). R603 carries a (Microbial infection) N-beta-linked (GlcNAc) arginine glycan.

The protein belongs to the protein kinase superfamily. TKL Ser/Thr protein kinase family. As to quaternary structure, homodimer. Interacts (via RIP homotypic interaction motif) with RIPK3 (via RIP homotypic interaction motif); this interaction induces RIPK1 phosphorylation and formation of a RIPK1-RIPK3 necroptosis-inducing complex. Upon TNF-induced necrosis, the RIPK1-RIPK3 dimer further interacts with PGAM5 and MLKL; the formation of this complex leads to PGAM5 phosphorylation and increase in PGAM5 phosphatase activity. Interacts (via the death domain) with TNFRSF6 (via the death domain) and TRADD (via the death domain). Is recruited by TRADD to TNFRSF1A in a TNF-dependent process. Binds RNF216, EGFR, IKBKG, TRAF1, TRAF2 and TRAF3. Interacts with BNLF1. Interacts with SQSTM1 upon TNF-alpha stimulation. May interact with MAVS/IPS1. Interacts with ZFAND5. Interacts with RBCK1. Interacts with ZBP1. Interacts with BIRC2/c-IAP1, BIRC3/c-IAP2 and XIAP/BIRC4. Interacts (via kinase domain) with DAB2IP (via Ras-GAP domain); the interaction occurs in a TNF-alpha-dependent manner. Interacts with ARHGEF2. Interacts (via protein kinase domain) with RFFL; involved in RIPK1 ubiquitination. Interacts with RNF34; involved in RIPK1 ubiquitination. Interacts with TICAM1 and this interaction is enhanced in the presence of WDFY1. Interacts with PELI1. Interacts (via death domain) with CRADD (via death domain); the interaction is direct. Component of complex IIa composed of at least RIPK1, FADD and CASP8. Component of the AIM2 PANoptosome complex, a multiprotein complex that drives inflammatory cell death (PANoptosis). Interacts with MAP3K7, CFLAR, CASP8, FADD and NEMO. Interacts with TAX1BP1; this interaction negatively regulates RIPK1 ubiquitination. Interacts with GRB2. Interacts with DDX24; this interaction disrupts RLR signaling activation of IFN-dependent transcription factor IRF7. In terms of assembly, (Microbial infection) Interacts with mumps virus protein SH; this interaction inhibits downstream NF-kappa-B pathway activation. (Microbial infection) Interacts with Murid herpesvirus 1 protein RIR1. As to quaternary structure, (Microbial infection) Interacts (via RIP homotypic interaction motif) with herpes simplex virus 1/HHV-1 protein RIR1/ICP6 (via RIP homotypic interaction motif); this interaction prevents necroptosis activation. In terms of assembly, (Microbial infection) Interacts (via RIP homotypic interaction motif) with herpes simplex virus 2/HHV-2 protein RIR1/ICP10 (via RIP homotypic interaction motif); this interaction prevents necroptosis activation. (Microbial infection) Proteolytically cleaved by S.flexneri OspD3 within the RIP homotypic interaction motif (RHIM), leading to its degradation and inhibition of necroptosis. Post-translationally, proteolytically cleaved by CASP8 at Asp-324. Cleavage is crucial for limiting TNF-induced apoptosis, necroptosis and inflammatory response. Cleavage abolishes NF-kappa-B activation and enhances the interaction of TRADD with FADD. Proteolytically cleaved by CASP6 during intrinsic apoptosis. In terms of processing, RIPK1 and RIPK3 undergo reciprocal auto- and trans-phosphorylation. Phosphorylation of Ser-161 by RIPK3 is necessary for the formation of the necroptosis-inducing complex. Phosphorylation at Ser-25 represses its kinase activity and consequently prevents TNF-mediated RIPK1-dependent cell death. Phosphorylated at Ser-320 by MAP3K7 which requires prior ubiquitination with 'Lys-63'-linked chains by BIRC2/c-IAP1 and BIRC3/c-IAP2. This phosphorylation positively regulates RIPK1 interaction with RIPK3 to promote necroptosis but negatively regulates RIPK1 kinase activity and its interaction with FADD to mediate apoptosis. Deubiquitinated by USP7; this modification is required for TNF-alpha-induced apoptosis. Post-translationally, ubiquitinated with 'Lys-11'-, 'Lys-48'-, 'Lys-63'- and linear-linked type ubiquitin. Polyubiquitination with 'Lys-63'-linked chains by TRAF2 induces association with the IKK complex. Deubiquitination of 'Lys-63'-linked chains and polyubiquitination with 'Lys-48'-linked chains by TNFAIP3 leads to RIPK1 proteasomal degradation and consequently down-regulates TNF-alpha-induced NF-kappa-B signaling. 'Lys-48'-linked polyubiquitination by RFFL or RNF34 also promotes proteasomal degradation and negatively regulates TNF-alpha-induced NF-kappa-B signaling. Linear polyubiquitinated; the head-to-tail linear polyubiquitination ('Met-1'-linked) is mediated by the LUBAC complex and decreases protein kinase activity. Deubiquitination of linear polyubiquitin by CYLD promotes the kinase activity. Polyubiquitinated with 'Lys-48' and 'Lys-63'-linked chains by BIRC2/c-IAP1 and BIRC3/c-IAP2, leading to activation of NF-kappa-B. Ubiquitinated with 'Lys-63'-linked chains by PELI1. Ubiquitination at Lys-377 with 'Lys-63'-linked chains by BIRC2/c-IAP1 and BIRC3/c-IAP2 is essential for its phosphorylation at Ser-320 mediated by MAP3K7. This ubiquitination is required for NF-kB activation, suppresses RIPK1 kinase activity and plays a critical role in preventing cell death during embryonic development. In terms of processing, (Microbial infection) Glycosylated at Arg-603 by enteropathogenic E.coli protein NleB1: arginine GlcNAcylation prevents homotypic/heterotypic death domain interactions.

The protein localises to the cytoplasm. It localises to the cell membrane. It catalyses the reaction L-seryl-[protein] + ATP = O-phospho-L-seryl-[protein] + ADP + H(+). It carries out the reaction L-threonyl-[protein] + ATP = O-phospho-L-threonyl-[protein] + ADP + H(+). Serine-threonine kinase activity is inhibited by linear polyubiquitination ('Met-1'-linked) by the LUBAC complex. Inhibited by necrostatins, including necrostatin-1, necrostatin-3 and necrostatin-4. Its function is as follows. Serine-threonine kinase which is a key regulator of TNF-mediated apoptosis, necroptosis and inflammatory pathways. Exhibits kinase activity-dependent functions that regulate cell death and kinase-independent scaffold functions regulating inflammatory signaling and cell survival. Has kinase-independent scaffold functions: upon binding of TNF to TNFR1, RIPK1 is recruited to the TNF-R1 signaling complex (TNF-RSC also known as complex I) where it acts as a scaffold protein promoting cell survival, in part, by activating the canonical NF-kappa-B pathway. Kinase activity is essential to regulate necroptosis and apoptosis, two parallel forms of cell death: upon activation of its protein kinase activity, regulates assembly of two death-inducing complexes, namely complex IIa (RIPK1-FADD-CASP8), which drives apoptosis, and the complex IIb (RIPK1-RIPK3-MLKL), which drives necroptosis. RIPK1 is required to limit CASP8-dependent TNFR1-induced apoptosis. In normal conditions, RIPK1 acts as an inhibitor of RIPK3-dependent necroptosis, a process mediated by RIPK3 component of complex IIb, which catalyzes phosphorylation of MLKL upon induction by ZBP1. Inhibits RIPK3-mediated necroptosis via FADD-mediated recruitment of CASP8, which cleaves RIPK1 and limits TNF-induced necroptosis. Required to inhibit apoptosis and necroptosis during embryonic development: acts by preventing the interaction of TRADD with FADD thereby limiting aberrant activation of CASP8. In addition to apoptosis and necroptosis, also involved in inflammatory response by promoting transcriptional production of pro-inflammatory cytokines, such as interleukin-6 (IL6). Phosphorylates RIPK3: RIPK1 and RIPK3 undergo reciprocal auto- and trans-phosphorylation. Phosphorylates DAB2IP at 'Ser-728' in a TNF-alpha-dependent manner, and thereby activates the MAP3K5-JNK apoptotic cascade. Required for ZBP1-induced NF-kappa-B activation in response to DNA damage. In Homo sapiens (Human), this protein is Receptor-interacting serine/threonine-protein kinase 1.